The primary structure comprises 161 residues: Phosphopantetheine adenylyltransferase (161 aa).

Thr10 serves as a coordination point for substrate. ATP-binding positions include 10 to 11 (TF) and His18. The substrate site is built by Lys42, Met74, and Arg88. Residues 89–91 (GVR), Glu99, and 124–130 (LSFVSSS) contribute to the ATP site.

This sequence belongs to the bacterial CoaD family. As to quaternary structure, homohexamer. Requires Mg(2+) as cofactor.

Its subcellular location is the cytoplasm. The enzyme catalyses (R)-4'-phosphopantetheine + ATP + H(+) = 3'-dephospho-CoA + diphosphate. It participates in cofactor biosynthesis; coenzyme A biosynthesis; CoA from (R)-pantothenate: step 4/5. In terms of biological role, reversibly transfers an adenylyl group from ATP to 4'-phosphopantetheine, yielding dephospho-CoA (dPCoA) and pyrophosphate. The sequence is that of Phosphopantetheine adenylyltransferase from Proteus mirabilis (strain HI4320).